A 306-amino-acid polypeptide reads, in one-letter code: Probable C-terminal domain small phosphatase (306 aa).

Residues 1–36 show a composition bias toward polar residues; it reads MNSSPITQVSNPNDSLNHSSTNLIPSSHNSLNNYPQ. Disordered stretches follow at residues 1–45 and 61–116; these read MNSS…NRKK and NDQN…NKDS. Residues 61–111 show a composition bias toward low complexity; the sequence is NDQNNGNNINTDNGASNNDKLQQQKQYNQQQQQQYNQHQQQQQQQQQQQQY. An FCP1 homology domain is found at 132–290; that stretch reads RHVGLKTLVL…LDLLPLLDDL (159 aa). Asp142 serves as the catalytic 4-aspartylphosphate intermediate. Mg(2+)-binding residues include Asp142, Asp144, and Asn253. The active-site Proton donor is the Asp144.

Monomer. The cofactor is Mg(2+).

The protein resides in the nucleus. The catalysed reaction is O-phospho-L-seryl-[protein] + H2O = L-seryl-[protein] + phosphate. The enzyme catalyses O-phospho-L-threonyl-[protein] + H2O = L-threonyl-[protein] + phosphate. Its function is as follows. May function as a phosphatase involved in the regulation of cell growth and differentiation. This is Probable C-terminal domain small phosphatase (fcpA) from Dictyostelium discoideum (Social amoeba).